Consider the following 189-residue polypeptide: Molybdopterin synthase catalytic subunit (189 aa).

A compositionally biased stretch (polar residues) spans 1–30 (MSSLEISNSCFSPETRSPSSRQSVEDNASE). The tract at residues 1–41 (MSSLEISNSCFSPETRSPSSRQSVEDNASEPSGKDVDDVQE) is disordered. Serine 20 carries the post-translational modification Phosphoserine. Residues 32–41 (SGKDVDDVQE) show a composition bias toward basic and acidic residues. Substrate is bound by residues 143–144 (HR), lysine 159, and 166–168 (KKE).

This sequence belongs to the MoaE family. MOCS2B subfamily. Heterotetramer; composed of 2 small (MOCS2A) and 2 large (MOCS2B) subunits.

It localises to the cytoplasm. The protein resides in the cytosol. The catalysed reaction is 2 [molybdopterin-synthase sulfur-carrier protein]-C-terminal-Gly-aminoethanethioate + cyclic pyranopterin phosphate + H2O = molybdopterin + 2 [molybdopterin-synthase sulfur-carrier protein]-C-terminal Gly-Gly + 2 H(+). The protein operates within cofactor biosynthesis; molybdopterin biosynthesis. Its function is as follows. Catalytic subunit of the molybdopterin synthase complex, a complex that catalyzes the conversion of precursor Z into molybdopterin. Acts by mediating the incorporation of 2 sulfur atoms from thiocarboxylated MOCS2A into precursor Z to generate a dithiolene group. The polypeptide is Molybdopterin synthase catalytic subunit (Mus musculus (Mouse)).